Reading from the N-terminus, the 389-residue chain is DNA damage checkpoint control protein RAD17 (389 aa).

The segment at Leu-358 to Leu-389 is disordered. Polar residues predominate over residues Pro-380–Leu-389.

It belongs to the rad1 family. In terms of assembly, component of the checkpoint clamp complex composed of DDC1, MEC3 and RAD17.

Its subcellular location is the nucleus. Functionally, component of the checkpoint clamp complex involved in the surveillance mechanism that allows the DNA repair pathways to act to restore the integrity of the DNA prior to DNA synthesis or separation of the replicated chromosomes. The chain is DNA damage checkpoint control protein RAD17 (RAD17) from Eremothecium gossypii (strain ATCC 10895 / CBS 109.51 / FGSC 9923 / NRRL Y-1056) (Yeast).